The sequence spans 171 residues: Large ribosomal subunit protein uL10 (171 aa).

It belongs to the universal ribosomal protein uL10 family. In terms of assembly, part of the ribosomal stalk of the 50S ribosomal subunit. The N-terminus interacts with L11 and the large rRNA to form the base of the stalk. The C-terminus forms an elongated spine to which L12 dimers bind in a sequential fashion forming a multimeric L10(L12)X complex.

Functionally, forms part of the ribosomal stalk, playing a central role in the interaction of the ribosome with GTP-bound translation factors. This Corynebacterium glutamicum (strain ATCC 13032 / DSM 20300 / JCM 1318 / BCRC 11384 / CCUG 27702 / LMG 3730 / NBRC 12168 / NCIMB 10025 / NRRL B-2784 / 534) protein is Large ribosomal subunit protein uL10.